The following is a 337-amino-acid chain: Protein RecA (337 aa).

66–73 serves as a coordination point for ATP; that stretch reads GPESSGKT.

It belongs to the RecA family.

It is found in the cytoplasm. In terms of biological role, can catalyze the hydrolysis of ATP in the presence of single-stranded DNA, the ATP-dependent uptake of single-stranded DNA by duplex DNA, and the ATP-dependent hybridization of homologous single-stranded DNAs. It interacts with LexA causing its activation and leading to its autocatalytic cleavage. This is Protein RecA from Mesomycoplasma hyopneumoniae (strain J / ATCC 25934 / NCTC 10110) (Mycoplasma hyopneumoniae).